Reading from the N-terminus, the 141-residue chain is Hemoglobin subunit alpha (141 aa).

The 141-residue stretch at 1-141 (VLSSADKANI…VSTVLTSKYR (141 aa)) folds into the Globin domain. Serine 3 is subject to Phosphoserine. Lysine 7 and lysine 11 each carry N6-succinyllysine. N6-acetyllysine; alternate is present on lysine 16. At lysine 16 the chain carries N6-succinyllysine; alternate. Tyrosine 24 is subject to Phosphotyrosine. Position 40 is an N6-succinyllysine (lysine 40). Serine 49 carries the phosphoserine modification. Histidine 58 serves as a coordination point for O2. Heme b is bound at residue histidine 87. The residue at position 102 (serine 102) is a Phosphoserine. Threonine 108 carries the phosphothreonine modification. A Phosphoserine modification is found at serine 131. Residues threonine 134 and threonine 137 each carry the phosphothreonine modification. The residue at position 138 (serine 138) is a Phosphoserine.

Belongs to the globin family. Heterotetramer of two alpha chains and two beta chains. Red blood cells.

Functionally, involved in oxygen transport from the lung to the various peripheral tissues. Hemopressin acts as an antagonist peptide of the cannabinoid receptor CNR1. Hemopressin-binding efficiently blocks cannabinoid receptor CNR1 and subsequent signaling. The protein is Hemoglobin subunit alpha (HBA) of Crocuta crocuta (Spotted hyena).